A 232-amino-acid polypeptide reads, in one-letter code: LOB domain-containing protein 11 (232 aa).

The segment at 1 to 50 (MLKMEINGGVATPTASAVAKVTETTTPVNSPSPTSSPPPPPSPQQPPQPP) is disordered. The segment covering 34–50 (TSSPPPPPSPQQPPQPP) has biased composition (pro residues). In terms of domain architecture, LOB spans 54–155 (SPCAACKILR…AQLAKTQVEL (102 aa)). A disordered region spans residues 181 to 218 (EQGQQKMSFESSFESGDEFISSPDEESNDLGFLEDNNN). Over residues 188–202 (SFESSFESGDEFISS) the composition is skewed to low complexity.

It belongs to the LOB domain-containing protein family. Expressed in young shoots, stems, leaves and flowers.

This chain is LOB domain-containing protein 11 (LBD11), found in Arabidopsis thaliana (Mouse-ear cress).